Consider the following 239-residue polypeptide: Secreted effector CFEM9 (239 aa).

The signal sequence occupies residues 1–18 (MRVLKFLSLMAMLGCTIG). The 107-residue stretch at 19-125 (QSGSATPGSL…DALRRREDEY (107 aa)) folds into the CFEM domain. 4 disulfide bridges follow: C43–C82, C47–C77, C57–C63, and C65–C98. D60 is a heme binding site. Polar residues predominate over residues 187-199 (KSATTTEATRNTV). The disordered stretch occupies residues 187–216 (KSATTTEATRNTVPASTTAPSPSPQLYTGN). The GPI-anchor amidated glycine moiety is linked to residue G215. N-linked (GlcNAc...) asparagine glycosylation is present at N216. The propeptide at 216–239 (NASTSRATVSLTVVLTVAAVYLVL) is removed in mature form.

The protein belongs to the RBT5 family.

The protein resides in the cell membrane. It is found in the secreted. Its subcellular location is the host nucleus. It localises to the host cell membrane. Appears to function during host infection, and may play a role in suppressing the host immune response. The polypeptide is Secreted effector CFEM9 (Marssonina brunnea f. sp. multigermtubi (strain MB_m1) (Marssonina leaf spot fungus)).